Consider the following 375-residue polypeptide: Alcohol dehydrogenase 1 (375 aa).

The residue at position 2 (Ser2) is an N-acetylserine. Residues Cys47, His68, Cys98, Cys101, Cys104, Cys112, and Cys175 each contribute to the Zn(2+) site. NAD(+) is bound by residues 200–205 (WSGRVG), Asp224, and Lys229. Lys234 bears the N6-succinyllysine mark. 293 to 295 (VGV) contacts NAD(+). Lys340 carries the post-translational modification N6-succinyllysine. Residue Arg370 coordinates NAD(+).

It belongs to the zinc-containing alcohol dehydrogenase family. Class-I subfamily. In terms of assembly, homodimer. Zn(2+) serves as cofactor.

The protein resides in the cytoplasm. It carries out the reaction a primary alcohol + NAD(+) = an aldehyde + NADH + H(+). The catalysed reaction is a secondary alcohol + NAD(+) = a ketone + NADH + H(+). The sequence is that of Alcohol dehydrogenase 1 (ADH1) from Geomys knoxjonesi (Jones' pocket gopher).